We begin with the raw amino-acid sequence, 1033 residues long: Translation initiation factor IF-2 (1033 aa).

A disordered region spans residues 49–432 (AFQQGGGNGR…APSVGGVMLP (384 aa)). Residues 59 to 113 (SAGRPAAPKKAAPRPSAPSPAQAGPSQAAPAAGDRAAAPRPSAAPKAPAAQQPAA) are compositionally biased toward low complexity. Composition is skewed to pro residues over residues 114 to 140 (PSAPAPAPSQGPRPTPGPKPAPRPAPA) and 148 to 164 (PAAPAAPSTPAPAPSGP). Over residues 171-189 (PGAPKPGGARPSGPGQDRG) the composition is skewed to low complexity. Positions 190–201 (QQGGQGRPGGQR) are enriched in gly residues. The span at 236–246 (APRPQGGPRPG) shows a compositional bias: pro residues. The segment covering 247–268 (GPGGAPGGGPRPQGPGGQGGGP) has biased composition (gly residues). Low complexity predominate over residues 305-314 (MMPQRPAAGP). Residues 318 to 401 (PGGGGRGPGG…GTQGAFGRPG (84 aa)) are compositionally biased toward gly residues. Over residues 405-414 (RRGRKSKRQR) the composition is skewed to basic residues. A tr-type G domain is found at 526–698 (VRPPVVTVMG…VVLTADASLD (173 aa)). The G1 stretch occupies residues 535–542 (GHVDHGKT). 535-542 (GHVDHGKT) provides a ligand contact to GTP. Residues 560–564 (GITQH) are G2. The G3 stretch occupies residues 585–588 (DTPG). Residues 585-589 (DTPGH) and 639-642 (NKID) each bind GTP. Positions 639–642 (NKID) are G4. The tract at residues 675–677 (SAK) is G5.

This sequence belongs to the TRAFAC class translation factor GTPase superfamily. Classic translation factor GTPase family. IF-2 subfamily.

It localises to the cytoplasm. Its function is as follows. One of the essential components for the initiation of protein synthesis. Protects formylmethionyl-tRNA from spontaneous hydrolysis and promotes its binding to the 30S ribosomal subunits. Also involved in the hydrolysis of GTP during the formation of the 70S ribosomal complex. This is Translation initiation factor IF-2 from Streptomyces coelicolor (strain ATCC BAA-471 / A3(2) / M145).